The primary structure comprises 224 residues: Large ribosomal subunit protein uL4 (224 aa).

The interval 52-109 is disordered; the sequence is AAARQGTHSTKTRGDVSGGGRKPYRQKGTGRARQGSTRTPQFTGGGVVHGPKPRDYSQ.

The protein belongs to the universal ribosomal protein uL4 family. In terms of assembly, part of the 50S ribosomal subunit.

In terms of biological role, one of the primary rRNA binding proteins, this protein initially binds near the 5'-end of the 23S rRNA. It is important during the early stages of 50S assembly. It makes multiple contacts with different domains of the 23S rRNA in the assembled 50S subunit and ribosome. Its function is as follows. Forms part of the polypeptide exit tunnel. The protein is Large ribosomal subunit protein uL4 of Mycobacterium ulcerans (strain Agy99).